A 184-amino-acid chain; its full sequence is Photosystem I assembly protein Ycf4 (184 aa).

2 consecutive transmembrane segments (helical) span residues 19–39 and 57–77; these read ISNF…LLVG and IIFF…LFIS.

This sequence belongs to the Ycf4 family.

Its subcellular location is the plastid. The protein localises to the chloroplast thylakoid membrane. Functionally, seems to be required for the assembly of the photosystem I complex. In Nicotiana sylvestris (Wood tobacco), this protein is Photosystem I assembly protein Ycf4.